We begin with the raw amino-acid sequence, 245 residues long: UDP-2,3-diacylglucosamine hydrolase (245 aa).

Residues aspartate 8, histidine 10, aspartate 41, asparagine 80, and histidine 115 each coordinate Mn(2+). Substrate is bound at residue 80–81; that stretch reads NR. Residues aspartate 123, serine 161, lysine 165, lysine 168, and histidine 196 each contribute to the substrate site. The Mn(2+) site is built by histidine 196 and histidine 198.

It belongs to the LpxH family. It depends on Mn(2+) as a cofactor.

Its subcellular location is the cell inner membrane. The catalysed reaction is UDP-2-N,3-O-bis[(3R)-3-hydroxytetradecanoyl]-alpha-D-glucosamine + H2O = 2-N,3-O-bis[(3R)-3-hydroxytetradecanoyl]-alpha-D-glucosaminyl 1-phosphate + UMP + 2 H(+). Its pathway is glycolipid biosynthesis; lipid IV(A) biosynthesis; lipid IV(A) from (3R)-3-hydroxytetradecanoyl-[acyl-carrier-protein] and UDP-N-acetyl-alpha-D-glucosamine: step 4/6. Its function is as follows. Hydrolyzes the pyrophosphate bond of UDP-2,3-diacylglucosamine to yield 2,3-diacylglucosamine 1-phosphate (lipid X) and UMP by catalyzing the attack of water at the alpha-P atom. Involved in the biosynthesis of lipid A, a phosphorylated glycolipid that anchors the lipopolysaccharide to the outer membrane of the cell. The sequence is that of UDP-2,3-diacylglucosamine hydrolase from Psychromonas ingrahamii (strain DSM 17664 / CCUG 51855 / 37).